The sequence spans 225 residues: Transcriptional activator protein CUP2 (225 aa).

Positions 1–40 (MVVINGVKYACETCIRGHRAAQCTHTDGPLQMIRRKGRPS) form a DNA-binding region, copper-fist. The interval 1–108 (MVVINGVKYA…KSKGGSCHRR (108 aa)) is binds copper and DNA. Residues C11, C14, C23, and H25 each coordinate Zn(2+). Residues 109-225 (ANDEAAHVNG…QVSSHNSHSQ (117 aa)) are required for transcriptional activation.

It localises to the nucleus. Its function is as follows. Trans-acting regulatory protein that activates transcription of the CUP1 gene (metallothionein) in response to copper ions. Binds to the CUP1 UAS sequence 5'-GCTTCTTTTCCGCTGA-3'. Binds DNA only in presence of copper or silver. Copper seems to alter the conformation of the protein. This chain is Transcriptional activator protein CUP2 (CUP2), found in Saccharomyces cerevisiae (strain ATCC 204508 / S288c) (Baker's yeast).